We begin with the raw amino-acid sequence, 541 residues long: MESQRNILLIGLLFVSFLLWQQWQADKAPKPVATESSLVANVASTHSADVPEADTGVPAAVAASKNLITVKTDQLDVQINPVGGDIVFAALVSHKMEQGKEQPFVLLEQTKDYTYIAQSGLIGRDGIDSSANGRAAFTTSATEFTLAEGQDTLEVPLTYVADNGVTYTKVFVFHRGKFNVDVDYKINNTSAAPLQVQMYGQIKQTIKPSESSMMMPTYRGGAFSTNDVRYEKYNFDDMAKSNLNQATLGGWAAMLQHYFVSAWVPPATDSNTIFSSVSAGGLANIGFRGAVYDIAPGASQEISSQFYVGPKDQAALSAISETLNLVVDYGFLWWLAVPIHWLLMFYQSFVGNWGVAIILITLTVRGLLFPLTKAQYTSMAKMRNLQPKLADLKERFGDDRQKMGQAMMELYKKEKVNPMGGCLPIILQMPIFIALYWVLLESFELRHAPFMLWIHDLSVQDPYYILPLLMGVSMFIMQKMQPIAPTMDPMQVKMMQWMPVIFTVFFLWFPSGLVLYWLVGNIVAIIQQKIIYAGLEKKGLK.

Helical transmembrane passes span N6–D26, L325–F345, F349–F369, G420–L440, L457–M477, and V500–G520.

The protein belongs to the OXA1/ALB3/YidC family. Type 1 subfamily. In terms of assembly, interacts with the Sec translocase complex via SecD. Specifically interacts with transmembrane segments of nascent integral membrane proteins during membrane integration.

It localises to the cell inner membrane. Required for the insertion and/or proper folding and/or complex formation of integral membrane proteins into the membrane. Involved in integration of membrane proteins that insert both dependently and independently of the Sec translocase complex, as well as at least some lipoproteins. Aids folding of multispanning membrane proteins. The polypeptide is Membrane protein insertase YidC (Shewanella sp. (strain W3-18-1)).